A 499-amino-acid chain; its full sequence is Glucosylglycerol-phosphate synthase (499 aa).

It belongs to the glycosyltransferase 20 family. Interacts with GGP-P. In terms of processing, seems to be degraded, at least in vitro, by FtsH2. In an ftsH2 disruption strain inactive GGPS accumulates.

The protein resides in the cytoplasm. It catalyses the reaction ADP-alpha-D-glucose + sn-glycerol 3-phosphate = 2-O-(alpha-D-glucopyranosyl)-sn-glycerol 3-phosphate + ADP + H(+). It functions in the pathway glycan metabolism; glucosylglycerol biosynthesis. In terms of biological role, involved in salt tolerance by producing GG-phosphate from ADP-glucose and glycerol-3-phosphate (G3P), an intermediate in the synthesis of the osmolyte glucosylglycerol (GG). This Synechocystis sp. (strain ATCC 27184 / PCC 6803 / Kazusa) protein is Glucosylglycerol-phosphate synthase (ggpS).